We begin with the raw amino-acid sequence, 932 residues long: DNA mismatch repair protein MutS (932 aa).

615–622 (GPNMAGKS) is an ATP binding site.

The protein belongs to the DNA mismatch repair MutS family.

Its function is as follows. This protein is involved in the repair of mismatches in DNA. It is possible that it carries out the mismatch recognition step. This protein has a weak ATPase activity. The polypeptide is DNA mismatch repair protein MutS (Clostridium botulinum (strain Okra / Type B1)).